A 284-amino-acid chain; its full sequence is Rhomboid-type serine protease 2 (284 aa).

The next 6 membrane-spanning stretches (helical) occupy residues 17-37 (PPALTTGLIVFTFMLCVIKSV), 66-86 (FHVNFFHWICNIFTLATPLAV), 98-118 (VTLNLLTVIAALQYCIVGLIF), 124-141 (VIGLSGIAFSLMSYMAYH), 160-180 (IKLYTLYVPFVVAIVFMILFP), and 182-202 (SSLPGHLFGITTGYLLSYGYI). S128 (nucleophile) is an active-site residue. H187 is a catalytic residue.

Belongs to the peptidase S54 family.

The protein resides in the golgi apparatus membrane. Its subcellular location is the golgi apparatus. It is found in the cis-Golgi network membrane. It catalyses the reaction Cleaves type-1 transmembrane domains using a catalytic dyad composed of serine and histidine that are contributed by different transmembrane domains.. In terms of biological role, probable rhomboid-type serine protease that catalyzes intramembrane proteolysis. The protein is Rhomboid-type serine protease 2 (RBD2) of Candida albicans (strain SC5314 / ATCC MYA-2876) (Yeast).